A 179-amino-acid polypeptide reads, in one-letter code: Large ribosomal subunit protein uL6 (179 aa).

The protein belongs to the universal ribosomal protein uL6 family. Part of the 50S ribosomal subunit.

This protein binds to the 23S rRNA, and is important in its secondary structure. It is located near the subunit interface in the base of the L7/L12 stalk, and near the tRNA binding site of the peptidyltransferase center. This Pelodictyon phaeoclathratiforme (strain DSM 5477 / BU-1) protein is Large ribosomal subunit protein uL6.